The primary structure comprises 287 residues: MAERLTGKPVADAIKEELKGRVADLKAKGIVPKLGIVRVGARPDDLYYEGGAKKTCESIGMDYEVFEYPQDIDQESFEKAIIEIGAKKDIHGILMFSPLPKHLNERKIRSLIPVEKDVDSLTLGSAGKVFADDPTGFPPCTPTAVMEILKYYNIPLEGKRAVVLGRSLVVGKPAAILLLRENATVTICHSRTKNLPDVCREADILVAAVGRAKMVKEDYVKPGMVVIDVGINEDPDNPGKYCGDVDFDKVEPIVDKITPVPGGVGSVTTAVLCKHTVKACEILNGLV.

Residues 165-167 (GRS), serine 190, and isoleucine 231 contribute to the NADP(+) site.

The protein belongs to the tetrahydrofolate dehydrogenase/cyclohydrolase family. Homodimer.

The catalysed reaction is (6R)-5,10-methylene-5,6,7,8-tetrahydrofolate + NADP(+) = (6R)-5,10-methenyltetrahydrofolate + NADPH. The enzyme catalyses (6R)-5,10-methenyltetrahydrofolate + H2O = (6R)-10-formyltetrahydrofolate + H(+). It functions in the pathway one-carbon metabolism; tetrahydrofolate interconversion. In terms of biological role, catalyzes the oxidation of 5,10-methylenetetrahydrofolate to 5,10-methenyltetrahydrofolate and then the hydrolysis of 5,10-methenyltetrahydrofolate to 10-formyltetrahydrofolate. This is Bifunctional protein FolD from Carboxydothermus hydrogenoformans (strain ATCC BAA-161 / DSM 6008 / Z-2901).